Consider the following 309-residue polypeptide: Porphobilinogen deaminase (309 aa).

The residue at position 244 (C244) is an S-(dipyrrolylmethanemethyl)cysteine.

The protein belongs to the HMBS family. As to quaternary structure, monomer. Dipyrromethane serves as cofactor.

It catalyses the reaction 4 porphobilinogen + H2O = hydroxymethylbilane + 4 NH4(+). It participates in porphyrin-containing compound metabolism; protoporphyrin-IX biosynthesis; coproporphyrinogen-III from 5-aminolevulinate: step 2/4. Tetrapolymerization of the monopyrrole PBG into the hydroxymethylbilane pre-uroporphyrinogen in several discrete steps. The polypeptide is Porphobilinogen deaminase (Listeria innocua serovar 6a (strain ATCC BAA-680 / CLIP 11262)).